Reading from the N-terminus, the 475-residue chain is Argininosuccinate lyase (475 aa).

It belongs to the lyase 1 family. Argininosuccinate lyase subfamily.

The protein resides in the cytoplasm. The catalysed reaction is 2-(N(omega)-L-arginino)succinate = fumarate + L-arginine. It functions in the pathway amino-acid biosynthesis; L-arginine biosynthesis; L-arginine from L-ornithine and carbamoyl phosphate: step 3/3. The polypeptide is Argininosuccinate lyase (Leifsonia xyli subsp. xyli (strain CTCB07)).